A 401-amino-acid chain; its full sequence is Formate-dependent phosphoribosylglycinamide formyltransferase (401 aa).

Residues 27 to 28 (EL) and Glu87 each bind N(1)-(5-phospho-beta-D-ribosyl)glycinamide. ATP-binding positions include Arg119, Lys160, 165–170 (SSGKGQ), 200–203 (EELV), and Glu208. Positions 124-313 (EFAAEEVGVT…QFDLHLRAIL (190 aa)) constitute an ATP-grasp domain. Glu272 and Glu284 together coordinate Mg(2+). Residues Asp291, Lys361, and 368 to 369 (RR) contribute to the N(1)-(5-phospho-beta-D-ribosyl)glycinamide site.

The protein belongs to the PurK/PurT family. Homodimer.

The enzyme catalyses N(1)-(5-phospho-beta-D-ribosyl)glycinamide + formate + ATP = N(2)-formyl-N(1)-(5-phospho-beta-D-ribosyl)glycinamide + ADP + phosphate + H(+). The protein operates within purine metabolism; IMP biosynthesis via de novo pathway; N(2)-formyl-N(1)-(5-phospho-D-ribosyl)glycinamide from N(1)-(5-phospho-D-ribosyl)glycinamide (formate route): step 1/1. Its function is as follows. Involved in the de novo purine biosynthesis. Catalyzes the transfer of formate to 5-phospho-ribosyl-glycinamide (GAR), producing 5-phospho-ribosyl-N-formylglycinamide (FGAR). Formate is provided by PurU via hydrolysis of 10-formyl-tetrahydrofolate. In Haloquadratum walsbyi (strain DSM 16790 / HBSQ001), this protein is Formate-dependent phosphoribosylglycinamide formyltransferase.